A 307-amino-acid chain; its full sequence is Protoheme IX farnesyltransferase (307 aa).

Helical transmembrane passes span 32–52 (MGIVNSNTLTVFTGFWLALHF), 65–85 (FFTIVGSGLVMAGVCCLNNYI), 108–128 (PGFALTFGLVILLLGFVFLLL), 131–151 (PMAVLMGFIGAFTYVVLYSLW), 158–178 (LNTVVGSISGAVPPLIGWAAI), 186–206 (IAWMLFLIMFIWQIPHFLALA), 251–271 (LGITFMVIATLLNIGWIVLGF), and 287–307 (FVYSLNYLTILFVSMIVVTFF).

Belongs to the UbiA prenyltransferase family. Protoheme IX farnesyltransferase subfamily. Interacts with CtaA.

It is found in the cell membrane. The catalysed reaction is heme b + (2E,6E)-farnesyl diphosphate + H2O = Fe(II)-heme o + diphosphate. It participates in porphyrin-containing compound metabolism; heme O biosynthesis; heme O from protoheme: step 1/1. In terms of biological role, converts heme B (protoheme IX) to heme O by substitution of the vinyl group on carbon 2 of heme B porphyrin ring with a hydroxyethyl farnesyl side group. The sequence is that of Protoheme IX farnesyltransferase from Bacillus cereus (strain G9842).